Consider the following 233-residue polypeptide: MPKHGKRYRALIEKVDRNRQYSIDEAAALVKDLATAKFDETVEVHFRLGIDPRKSDQNVRGTVALPHGTGKTVRVAVITKGDNVAAAEAAGADVVGGEDLIDRIANGFMDFDAVVATPDMMAQIGQKLARLLGPRGLLPNPKSGTVGPDVAGMVRGLKAGRIEFRNDKTGVVHAPIGKASFDPSNLSANYRALLSALEAAKPAAAKGVYLRSAYLTSTMGPSIPLTLSAQAQA.

This sequence belongs to the universal ribosomal protein uL1 family. As to quaternary structure, part of the 50S ribosomal subunit.

Functionally, binds directly to 23S rRNA. The L1 stalk is quite mobile in the ribosome, and is involved in E site tRNA release. Protein L1 is also a translational repressor protein, it controls the translation of the L11 operon by binding to its mRNA. This chain is Large ribosomal subunit protein uL1, found in Deinococcus geothermalis (strain DSM 11300 / CIP 105573 / AG-3a).